The sequence spans 298 residues: Zinc finger protein-like 1 homolog (298 aa).

The B box-type; degenerate zinc finger occupies 1–43 (MGLCKCPKRLVTNQFCFEHRVNVCEHCMVQSHPKCIVQSYLQW). The RING-type; atypical zinc-finger motif lies at 53 to 101 (CTLCGTTLEQGDCVRLVCYHVFHWDCLNARQAALPANTAPRGHQCPACT). The interval 199-230 (AGDYASSRRPLLPRQSPIGGTDRDDNKYQRRT) is disordered. A Phosphoserine modification is found at S214. A helical membrane pass occupies residues 255 to 275 (WFLVTAGILAFVLFVYLMAWL).

The protein belongs to the ZFPL1 family.

The protein localises to the membrane. The polypeptide is Zinc finger protein-like 1 homolog (Drosophila erecta (Fruit fly)).